The primary structure comprises 631 residues: Pescadillo homolog (631 aa).

The BRCT domain occupies 321 to 414 (RLRTLFKGLK…QLLPTNDYFL (94 aa)). The span at 428 to 442 (SKRDSYIPPEEKALH) shows a compositional bias: basic and acidic residues. 2 disordered regions span residues 428-471 (SKRD…EADQ) and 489-560 (YKKY…EVDE). Phosphoserine is present on residues Ser-453 and Ser-457. Acidic residues-rich tracts occupy residues 453–471 (SEEE…EADQ) and 498–525 (VNED…EDVD). Over residues 526–538 (EQTKRKQQEKEKM) the composition is skewed to basic and acidic residues. Over residues 544-553 (KVHKVNKRQV) the composition is skewed to basic residues. The stretch at 593–629 (LRKKRRNIDADTKEAKKAAKREARKLAAEAAARAAKL) forms a coiled coil.

Belongs to the pescadillo family.

The protein localises to the nucleus. The protein resides in the nucleolus. It localises to the nucleoplasm. Functionally, required for maturation of ribosomal RNAs and formation of the large ribosomal subunit. The chain is Pescadillo homolog from Drosophila persimilis (Fruit fly).